We begin with the raw amino-acid sequence, 432 residues long: MGKSVVILGAQWGDEGKGKIVDLLTDRVKYVVRYQGGHNAGHTLIINGEKTVLRLIPSGILRENVTCLIGNGVVLSPAALMQEMGELESRGINVRERLLISEACPLILPYHVAMDHAREAALGKNKIGTTGRGIGPAYEDKVARRGLRVGDLFNREAFAEKLKTILDYYNFQLVNYYKAEAVDFQKTLDDVMAVADIITGMVADVTTMLDKARKNGDNILFEGAQGTMLDIDHGTYPFVTSSNTTAGGVATGAGFGPRNLDYVLGIIKAYCTRVGGGPFTTELFDEVGSEIARKGNEFGAVTGRPRRCGWFDAVAIRRAIQLNSISGFCMTKLDVLDGFDEVKICVAYKMPNGDILDYAPLAAKDWEGVEPIYETMPGWKENTFGVTDVNQLPEACRNYVKRIEEVTGVPVDILSTGPDRVETMILRDPFAA.

GTP is bound by residues 13–19 (GDEGKGK) and 41–43 (GHT). Asp14 functions as the Proton acceptor in the catalytic mechanism. Mg(2+) contacts are provided by Asp14 and Gly41. Residues 14 to 17 (DEGK), 39 to 42 (NAGH), Thr130, Arg144, Gln225, Thr240, and Arg304 each bind IMP. The active-site Proton donor is His42. A substrate-binding site is contributed by 300–306 (AVTGRPR). GTP contacts are provided by residues Arg306, 332-334 (KLD), and 415-417 (STG).

Belongs to the adenylosuccinate synthetase family. In terms of assembly, homodimer. Mg(2+) serves as cofactor.

It is found in the cytoplasm. It catalyses the reaction IMP + L-aspartate + GTP = N(6)-(1,2-dicarboxyethyl)-AMP + GDP + phosphate + 2 H(+). It functions in the pathway purine metabolism; AMP biosynthesis via de novo pathway; AMP from IMP: step 1/2. Its function is as follows. Plays an important role in the de novo pathway of purine nucleotide biosynthesis. Catalyzes the first committed step in the biosynthesis of AMP from IMP. In Pasteurella multocida (strain Pm70), this protein is Adenylosuccinate synthetase.